Consider the following 873-residue polypeptide: Protein translocase subunit SecA (873 aa).

ATP is bound by residues Gln-88, 106 to 110 (GEGKT), and Asp-501. Residues Cys-856, Cys-858, Cys-867, and His-868 each coordinate Zn(2+).

It belongs to the SecA family. As to quaternary structure, monomer and homodimer. Part of the essential Sec protein translocation apparatus which comprises SecA, SecYEG and auxiliary proteins SecDF-YajC and YidC. The cofactor is Zn(2+).

The protein localises to the cell inner membrane. The protein resides in the cytoplasm. The catalysed reaction is ATP + H2O + cellular proteinSide 1 = ADP + phosphate + cellular proteinSide 2.. Its function is as follows. Part of the Sec protein translocase complex. Interacts with the SecYEG preprotein conducting channel. Has a central role in coupling the hydrolysis of ATP to the transfer of proteins into and across the cell membrane, serving both as a receptor for the preprotein-SecB complex and as an ATP-driven molecular motor driving the stepwise translocation of polypeptide chains across the membrane. The sequence is that of Protein translocase subunit SecA from Anaplasma phagocytophilum (strain HZ).